The primary structure comprises 245 residues: Ribonuclease 3 (245 aa).

Residues 19–148 enclose the RNase III domain; that stretch reads FRAFQQKLGI…FIGALYLDQG (130 aa). Glu-61 lines the Mg(2+) pocket. Asp-65 is a catalytic residue. The Mg(2+) site is built by Asp-134 and Glu-137. Glu-137 is a catalytic residue. Residues 174–243 form the DRBM domain; the sequence is DYKSQLQELI…AAEALRKLKE (70 aa).

The protein belongs to the ribonuclease III family. Homodimer. Requires Mg(2+) as cofactor.

The protein resides in the cytoplasm. The catalysed reaction is Endonucleolytic cleavage to 5'-phosphomonoester.. Digests double-stranded RNA. Involved in the processing of primary rRNA transcript to yield the immediate precursors to the large and small rRNAs (23S and 16S). Processes some mRNAs, and tRNAs when they are encoded in the rRNA operon. Processes pre-crRNA and tracrRNA of type II CRISPR loci if present in the organism. The polypeptide is Ribonuclease 3 (Bacillus cytotoxicus (strain DSM 22905 / CIP 110041 / 391-98 / NVH 391-98)).